Reading from the N-terminus, the 615-residue chain is UvrABC system protein C (615 aa).

The GIY-YIG domain occupies threonine 14–isoleucine 91. One can recognise a UVR domain in the interval asparagine 196 to leucine 231.

The protein belongs to the UvrC family. Interacts with UvrB in an incision complex.

It localises to the cytoplasm. In terms of biological role, the UvrABC repair system catalyzes the recognition and processing of DNA lesions. UvrC both incises the 5' and 3' sides of the lesion. The N-terminal half is responsible for the 3' incision and the C-terminal half is responsible for the 5' incision. The protein is UvrABC system protein C of Streptococcus pneumoniae serotype 19F (strain G54).